We begin with the raw amino-acid sequence, 497 residues long: Glycerol kinase (497 aa).

ADP is bound at residue T12. ATP is bound by residues T12, T13, and S14. Sn-glycerol 3-phosphate is bound at residue T12. ADP is bound at residue R16. The sn-glycerol 3-phosphate site is built by R82, E83, Y134, and D243. 5 residues coordinate glycerol: R82, E83, Y134, D243, and Q244. Residues T265 and G308 each contribute to the ADP site. Residues T265, G308, Q312, and G409 each contribute to the ATP site. 2 residues coordinate ADP: G409 and N413.

Belongs to the FGGY kinase family.

The catalysed reaction is glycerol + ATP = sn-glycerol 3-phosphate + ADP + H(+). Its pathway is polyol metabolism; glycerol degradation via glycerol kinase pathway; sn-glycerol 3-phosphate from glycerol: step 1/1. Inhibited by fructose 1,6-bisphosphate (FBP). In terms of biological role, key enzyme in the regulation of glycerol uptake and metabolism. Catalyzes the phosphorylation of glycerol to yield sn-glycerol 3-phosphate. This is Glycerol kinase from Nitratidesulfovibrio vulgaris (strain ATCC 29579 / DSM 644 / CCUG 34227 / NCIMB 8303 / VKM B-1760 / Hildenborough) (Desulfovibrio vulgaris).